The primary structure comprises 781 residues: Death domain-containing protein 1 (781 aa).

2 ZU5 domains span residues 167–301 (IMEK…VSCL) and 302–483 (KKES…VLHL). The region spanning 679 to 764 (DNLLHWLAEE…DLAEELKFKW (86 aa)) is the Death domain.

The polypeptide is Death domain-containing protein 1 (DTHD1) (Homo sapiens (Human)).